Consider the following 168-residue polypeptide: Peptide deformylase 1 (168 aa).

The Fe cation site is built by cysteine 92 and histidine 134. The active site involves glutamate 135. Histidine 138 lines the Fe cation pocket.

This sequence belongs to the polypeptide deformylase family. Fe(2+) serves as cofactor.

The catalysed reaction is N-terminal N-formyl-L-methionyl-[peptide] + H2O = N-terminal L-methionyl-[peptide] + formate. In terms of biological role, removes the formyl group from the N-terminal Met of newly synthesized proteins. Requires at least a dipeptide for an efficient rate of reaction. N-terminal L-methionine is a prerequisite for activity but the enzyme has broad specificity at other positions. The polypeptide is Peptide deformylase 1 (Pseudomonas syringae pv. tomato (strain ATCC BAA-871 / DC3000)).